We begin with the raw amino-acid sequence, 91 residues long: Peptide Ctry2146 (91 aa).

Residues 1–23 (MKTQTLLVTFLVVLLMVATQTEA) form the signal peptide. A Leucine amide modification is found at Leu33. The propeptide occupies 37-91 (GLLDGLLGKRGLLFGKRGPLFGKRALTNQDFLDFAYDPSLSAADMDALEMLFEDY).

It belongs to the non-disulfide-bridged peptide (NDBP) superfamily. Short antimicrobial peptide (group 4) family. Expressed by the venom gland.

It is found in the secreted. Its subcellular location is the target cell membrane. Its function is as follows. Antimicrobial peptide. The protein is Peptide Ctry2146 of Chaerilus tryznai (Scorpion).